Reading from the N-terminus, the 752-residue chain is Sialidase 85-1.1 (752 aa).

Residues 1-23 (MSRRVFASAVLLLIVVTMCCGGA) form the signal peptide. BNR repeat units follow at residues 274 to 285 (IYSKDNGSTWSL) and 319 to 330 (YVSRDMGTTWTE). The interval 693–725 (APEPQVKIAPKPAAPAAPAGNEETARETGDGGA) is disordered. Low complexity predominate over residues 701 to 711 (APKPAAPAAPA).

It belongs to the glycosyl hydrolase 33 family.

It catalyses the reaction Hydrolysis of alpha-(2-&gt;3)-, alpha-(2-&gt;6)-, alpha-(2-&gt;8)- glycosidic linkages of terminal sialic acid residues in oligosaccharides, glycoproteins, glycolipids, colominic acid and synthetic substrates.. Its function is as follows. Developmentally regulated neuraminidase implicated in parasite invasion of cells. May contribute to the pathology during T.cruzi infection by cleaving sialic acid from cells of the immune system. This Trypanosoma cruzi protein is Sialidase 85-1.1 (SA85-1.1).